The primary structure comprises 373 residues: 4-hydroxy-3-methylbut-2-en-1-yl diphosphate synthase (flavodoxin) (373 aa).

Positions 270, 273, 305, and 312 each coordinate [4Fe-4S] cluster.

Belongs to the IspG family. [4Fe-4S] cluster serves as cofactor.

It catalyses the reaction (2E)-4-hydroxy-3-methylbut-2-enyl diphosphate + oxidized [flavodoxin] + H2O + 2 H(+) = 2-C-methyl-D-erythritol 2,4-cyclic diphosphate + reduced [flavodoxin]. Its pathway is isoprenoid biosynthesis; isopentenyl diphosphate biosynthesis via DXP pathway; isopentenyl diphosphate from 1-deoxy-D-xylulose 5-phosphate: step 5/6. Functionally, converts 2C-methyl-D-erythritol 2,4-cyclodiphosphate (ME-2,4cPP) into 1-hydroxy-2-methyl-2-(E)-butenyl 4-diphosphate. The protein is 4-hydroxy-3-methylbut-2-en-1-yl diphosphate synthase (flavodoxin) of Serratia proteamaculans (strain 568).